The sequence spans 286 residues: Pantothenate synthetase (286 aa).

Position 30–37 (30–37 (MGFLHEGH)) interacts with ATP. His37 (proton donor) is an active-site residue. Position 61 (Gln61) interacts with (R)-pantoate. Gln61 is a binding site for beta-alanine. 147–150 (GLKD) is an ATP binding site. Gln153 provides a ligand contact to (R)-pantoate. ATP contacts are provided by residues Val176 and 184-187 (KSSR).

This sequence belongs to the pantothenate synthetase family. As to quaternary structure, homodimer.

Its subcellular location is the cytoplasm. The enzyme catalyses (R)-pantoate + beta-alanine + ATP = (R)-pantothenate + AMP + diphosphate + H(+). Its pathway is cofactor biosynthesis; (R)-pantothenate biosynthesis; (R)-pantothenate from (R)-pantoate and beta-alanine: step 1/1. Functionally, catalyzes the condensation of pantoate with beta-alanine in an ATP-dependent reaction via a pantoyl-adenylate intermediate. The chain is Pantothenate synthetase from Bacillus velezensis (strain DSM 23117 / BGSC 10A6 / LMG 26770 / FZB42) (Bacillus amyloliquefaciens subsp. plantarum).